We begin with the raw amino-acid sequence, 246 residues long: NAD-dependent protein deacetylase (246 aa).

The region spanning M1–S246 is the Deacetylase sirtuin-type domain. Residues A25, F36, R37, Q106, I108, D109, and H124 each contribute to the NAD(+) site. F36 contributes to the nicotinamide binding site. The nicotinamide site is built by I108 and D109. H124 functions as the Proton acceptor in the catalytic mechanism. The Zn(2+) site is built by C132, C135, C152, and C155. NAD(+) is bound by residues S193, S194, N216, and D233.

It belongs to the sirtuin family. Class U subfamily. It depends on Zn(2+) as a cofactor.

It localises to the cytoplasm. It carries out the reaction N(6)-acetyl-L-lysyl-[protein] + NAD(+) + H2O = 2''-O-acetyl-ADP-D-ribose + nicotinamide + L-lysyl-[protein]. Functionally, NAD-dependent protein deacetylase which modulates the activities of several enzymes which are inactive in their acetylated form. The sequence is that of NAD-dependent protein deacetylase from Staphylococcus epidermidis (strain ATCC 35984 / DSM 28319 / BCRC 17069 / CCUG 31568 / BM 3577 / RP62A).